The following is a 110-amino-acid chain: Ig kappa chain V region 3547 (110 aa).

The tract at residues 1 to 23 (AYDMTQTPSSVSAAVGGTVTINC) is framework-1. The tract at residues 24 to 34 (QASEDISANLA) is complementarity-determining-1. The segment at 35–49 (WYQQKPGQPPKLLIY) is framework-2. The segment at 50-56 (AASDLAS) is complementarity-determining-2. The interval 57–88 (GVPSRFKGSGSGTEYTLTISGVQCADAATYYC) is framework-3. Positions 89–99 (QSADYSGSAVT) are complementarity-determining-3. Residues 100 to 109 (FGGGTEVVVK) are framework-4.

This chain is Ig kappa chain V region 3547, found in Oryctolagus cuniculus (Rabbit).